The primary structure comprises 310 residues: Bifunctional protein FolD 3, chloroplastic (310 aa).

A chloroplast-targeting transit peptide spans 1 to 48 (MFTDCSSSTTSRLIHLYNRNGVFLPRPSVSQFSLRTTASTWRCTLSIR).

This sequence belongs to the tetrahydrofolate dehydrogenase/cyclohydrolase family. In terms of assembly, homodimer.

The protein localises to the plastid. Its subcellular location is the chloroplast. It catalyses the reaction (6R)-5,10-methylene-5,6,7,8-tetrahydrofolate + NADP(+) = (6R)-5,10-methenyltetrahydrofolate + NADPH. It carries out the reaction (6R)-5,10-methenyltetrahydrofolate + H2O = (6R)-10-formyltetrahydrofolate + H(+). The protein operates within one-carbon metabolism; tetrahydrofolate interconversion. In terms of biological role, catalyzes the oxidation of 5,10-methylenetetrahydrofolate to 5,10-methenyltetrahydrofolate and then the hydrolysis of 5,10-methenyltetrahydrofolate to 10-formyltetrahydrofolate. The chain is Bifunctional protein FolD 3, chloroplastic (FOLD3) from Arabidopsis thaliana (Mouse-ear cress).